The following is a 200-amino-acid chain: Elongation factor Ts (200 aa).

Residues Thr-82 to Val-85 are involved in Mg(2+) ion dislocation from EF-Tu.

Belongs to the EF-Ts family.

It is found in the cytoplasm. In terms of biological role, associates with the EF-Tu.GDP complex and induces the exchange of GDP to GTP. It remains bound to the aminoacyl-tRNA.EF-Tu.GTP complex up to the GTP hydrolysis stage on the ribosome. The sequence is that of Elongation factor Ts from Solidesulfovibrio magneticus (strain ATCC 700980 / DSM 13731 / RS-1) (Desulfovibrio magneticus).